The sequence spans 215 residues: Chloramphenicol acetyltransferase (215 aa).

Residue histidine 189 is the Proton acceptor of the active site.

It belongs to the chloramphenicol acetyltransferase family. As to quaternary structure, homotrimer.

It catalyses the reaction chloramphenicol + acetyl-CoA = chloramphenicol 3-acetate + CoA. This enzyme is an effector of chloramphenicol resistance in bacteria. The polypeptide is Chloramphenicol acetyltransferase (cat) (Staphylococcus aureus).